Here is a 221-residue protein sequence, read N- to C-terminus: Putative NAD(P)H nitroreductase YfkO (221 aa).

FMN contacts are provided by residues 15–17 (RHA) and 73–75 (QKQ). Position 157-162 (157-162 (AAAQIG)) interacts with NAD(+). FMN is bound by residues 169 to 170 (EG) and R211.

The protein belongs to the nitroreductase family. Monomer. The cofactor is FMN.

This chain is Putative NAD(P)H nitroreductase YfkO (yfkO), found in Bacillus subtilis (strain 168).